A 447-amino-acid chain; its full sequence is Ribosomal protein uS12 methylthiotransferase RimO (447 aa).

The region spanning 4–114 (PKVGFVSLGC…VMEAVHEYVP (111 aa)) is the MTTase N-terminal domain. [4Fe-4S] cluster-binding residues include cysteine 13, cysteine 49, cysteine 78, cysteine 147, cysteine 151, and cysteine 154. The 238-residue stretch at 133–370 (LTPKHYAYLK…MQVQQQISAA (238 aa)) folds into the Radical SAM core domain. The TRAM domain maps to 373-443 (QKRIGQTMTV…EYDLFAKLIK (71 aa)).

This sequence belongs to the methylthiotransferase family. RimO subfamily. [4Fe-4S] cluster is required as a cofactor.

The protein localises to the cytoplasm. The enzyme catalyses L-aspartate(89)-[ribosomal protein uS12]-hydrogen + (sulfur carrier)-SH + AH2 + 2 S-adenosyl-L-methionine = 3-methylsulfanyl-L-aspartate(89)-[ribosomal protein uS12]-hydrogen + (sulfur carrier)-H + 5'-deoxyadenosine + L-methionine + A + S-adenosyl-L-homocysteine + 2 H(+). Its function is as follows. Catalyzes the methylthiolation of an aspartic acid residue of ribosomal protein uS12. The protein is Ribosomal protein uS12 methylthiotransferase RimO of Acinetobacter baumannii (strain AB307-0294).